The following is a 645-amino-acid chain: Protein disulfide-isomerase A4 (645 aa).

A signal peptide spans 1 to 20 (MRPRKAFLLLLLLGLVQLLA). Thioredoxin domains are found at residues 21–169 (VAGA…EVSQ) and 158–301 (EEIV…EFLK). Positions 24–58 (AEGPDEDSSNRENAIEDEEEEEEEDDDEEEDDLEV) are disordered. Residues 38–58 (IEDEEEEEEEDDDEEEDDLEV) are compositionally biased toward acidic residues. Positions 91–94 (CGHC) match the CXXC motif. Intrachain disulfides connect C91-C94 and C206-C209. K366 carries the N6-acetyllysine modification. Positions 505–636 (FKKGKLKPVI…LSKFIEEHAT (132 aa)) constitute a Thioredoxin 3 domain. The short motif at 555-558 (CGHC) is the CXXC element. The cysteines at positions 555 and 558 are disulfide-linked. A Prevents secretion from ER motif is present at residues 642–645 (KEEL).

Belongs to the protein disulfide isomerase family. In terms of assembly, part of a large chaperone multiprotein complex comprising DNAJB11, HSP90B1, HSPA5, HYOU, PDIA2, PDIA4, PDIA6, PPIB, SDF2L1, UGGT1 and very small amounts of ERP29, but not, or at very low levels, CALR nor CANX. Component of a complex containing at least CRELD2, MANF, MATN3 and PDIA4. (Microbial infection) Interacts with Human astrovirus-1 and Human astrovirus-8 spike protein VP25; this interaction seems to facilitate the uncoating during virus entry into the cell. Does not interact with Human astrovirus-2 spike protein VP25.

It localises to the endoplasmic reticulum lumen. It is found in the melanosome. The enzyme catalyses Catalyzes the rearrangement of -S-S- bonds in proteins.. This chain is Protein disulfide-isomerase A4 (PDIA4), found in Homo sapiens (Human).